Consider the following 482-residue polypeptide: Uric acid transporter UacT (482 aa).

At 1–29 (MSAIDSQLPSSSGQDRPTDEVDRILSPGK) the chain is on the cytoplasmic side. Residues 30 to 50 (LIILGLQHVLVMYAGAVAVPL) traverse the membrane as a helical segment. At 51–62 (MIGDRLGLSKEA) the chain is on the periplasmic side. The chain crosses the membrane as a helical span at residues 63 to 83 (IAMLISSDLFCCGIVTLLQCI). Residues 84 to 92 (GIGRFMGIR) lie on the Cytoplasmic side of the membrane. A helical transmembrane segment spans residues 93–113 (LPVIMSVTFAAVTPMIAIGMN). Topologically, residues 114 to 115 (PD) are periplasmic. A helical transmembrane segment spans residues 116–136 (IGLLGIFGATIAAGFITTLLA). Topologically, residues 137 to 142 (PLIGRL) are cytoplasmic. Residues 143–163 (MPLFPPLVTGVVITSIGLSII) form a helical membrane-spanning segment. The Periplasmic segment spans residues 164–178 (QVGIDWAAGGKGNPQ). A helical membrane pass occupies residues 179–199 (YGNPVYLGISFAVLIFILLIT). At 200 to 204 (RYAKG) the chain is on the cytoplasmic side. A helical transmembrane segment spans residues 205–225 (FMSNVAVLLGIVFGFLLSWMM). Residues 226–261 (NEVNLSGLHDASWFAIVTPMSFGMPIFDPVSILTMT) are Periplasmic-facing. The helical transmembrane segment at 262–282 (AVLIIVFIESMGMFLALGEIV) threads the bilayer. Residues 283-337 (GRKLSSHDIIRGLRVDGVGTMIGGTFNSFPHTSFSQNVGLVSVTRVHSRWVCISS) are Cytoplasmic-facing. The helical transmembrane segment at 338-358 (GIILILFGMVPKMAVLVASIP) threads the bilayer. Residue Q359 is a topological domain, periplasmic. The helical transmembrane segment at 360-380 (FVLGGAGLVMFGMVLATGIRI) threads the bilayer. The Cytoplasmic segment spans residues 381-392 (LSRCNYTTNRYN). A helical transmembrane segment spans residues 393–413 (LYIVAISLGVGMTPTLSHDFF). The Periplasmic portion of the chain corresponds to 414-421 (SKLPAVLQ). Residues 422-442 (PLLHSGIMLATLSAVVLNVFF) form a helical membrane-spanning segment. Residues 443–482 (NGYQHHADLVKESVSDKDLKVRTVRMWLLMRKLKKNEHGE) are Cytoplasmic-facing.

It belongs to the nucleobase:cation symporter-2 (NCS2) (TC 2.A.40) family.

Its subcellular location is the cell inner membrane. Its activity is regulated as follows. Inhibited in the presence of the protonophore carbonyl cyanide m-chlorophenyl hydrazone. Its function is as follows. Proton-dependent high-capacity transporter for uric acid. Also shows a low capacity for transport of xanthine at 37 degrees Celsius but not at 25 degrees Celsius. This chain is Uric acid transporter UacT (uacT), found in Escherichia coli (strain K12).